Reading from the N-terminus, the 749-residue chain is Transcription factor RFX3 (749 aa).

Positions 183–258 form a DNA-binding region, RFX-type winged-helix; sequence HLQWLLDNYE…YHYYGIRVKP (76 aa). The segment at 663–699 is disordered; the sequence is VSPGNLDKDEGSEVESEMDEELDDSSEPQAKREKTEL. Residues 674–688 show a composition bias toward acidic residues; it reads SEVESEMDEELDDSS.

Belongs to the RFX family. Heterodimer; heterodimerizes with RFX1 and RFX2, and RFX6.

Its subcellular location is the nucleus. Transcription factor required for ciliogenesis and islet cell differentiation during endocrine pancreas development. Essential for the differentiation of nodal monocilia and left-right asymmetry specification during embryogenesis. Required for the biogenesis of motile cilia by governing growth and beating efficiency of motile cells. Also required for ciliated ependymal cell differentiation. Regulates the expression of genes involved in ciliary assembly (DYNC2LI1, FOXJ1 and BBS4) and genes involved in ciliary motility (DNAH11, DNAH9 and DNAH5). Together with RFX6, participates in the differentiation of 4 of the 5 islet cell types during endocrine pancreas development, with the exception of pancreatic PP (polypeptide-producing) cells. Regulates transcription by forming a heterodimer with another RFX protein and binding to the X-box in the promoter of target genes. Represses transcription of MAP1A in non-neuronal cells but not in neuronal cells. The protein is Transcription factor RFX3 (RFX3) of Macaca fascicularis (Crab-eating macaque).